The primary structure comprises 123 residues: uncharacterized protein (123 aa).

A helical membrane pass occupies residues 5 to 25 (GTLVIIFAIVLILCIMLLFFY). Residues 32-53 (KSGVLPPPIPPPTPPPPKKKYD) are disordered. The span at 36–47 (LPPPIPPPTPPP) shows a compositional bias: pro residues.

This sequence belongs to the asfivirus CP123L family.

The protein resides in the host membrane. The protein localises to the virion. This is an uncharacterized protein from Ornithodoros (relapsing fever ticks).